Reading from the N-terminus, the 183-residue chain is Alkyl hydroperoxide reductase AhpD (183 aa).

Cys-132 (proton donor) is an active-site residue. Cys-132 and Cys-135 are joined by a disulfide. The active-site Cysteine sulfenic acid (-SOH) intermediate is Cys-135.

This sequence belongs to the AhpD family.

The catalysed reaction is N(6)-[(R)-dihydrolipoyl]-L-lysyl-[lipoyl-carrier protein] + a hydroperoxide = N(6)-[(R)-lipoyl]-L-lysyl-[lipoyl-carrier protein] + an alcohol + H2O. Its function is as follows. Antioxidant protein with alkyl hydroperoxidase activity. Required for the reduction of the AhpC active site cysteine residues and for the regeneration of the AhpC enzyme activity. This Acidobacterium capsulatum (strain ATCC 51196 / DSM 11244 / BCRC 80197 / JCM 7670 / NBRC 15755 / NCIMB 13165 / 161) protein is Alkyl hydroperoxide reductase AhpD.